Consider the following 151-residue polypeptide: D-aminoacyl-tRNA deacylase (151 aa).

Positions 136 to 137 (GP) match the Gly-cisPro motif, important for rejection of L-amino acids motif.

This sequence belongs to the DTD family. As to quaternary structure, homodimer.

The protein localises to the cytoplasm. The enzyme catalyses glycyl-tRNA(Ala) + H2O = tRNA(Ala) + glycine + H(+). The catalysed reaction is a D-aminoacyl-tRNA + H2O = a tRNA + a D-alpha-amino acid + H(+). In terms of biological role, an aminoacyl-tRNA editing enzyme that deacylates mischarged D-aminoacyl-tRNAs. Also deacylates mischarged glycyl-tRNA(Ala), protecting cells against glycine mischarging by AlaRS. Acts via tRNA-based rather than protein-based catalysis; rejects L-amino acids rather than detecting D-amino acids in the active site. By recycling D-aminoacyl-tRNA to D-amino acids and free tRNA molecules, this enzyme counteracts the toxicity associated with the formation of D-aminoacyl-tRNA entities in vivo and helps enforce protein L-homochirality. This chain is D-aminoacyl-tRNA deacylase, found in Streptococcus gordonii (strain Challis / ATCC 35105 / BCRC 15272 / CH1 / DL1 / V288).